We begin with the raw amino-acid sequence, 533 residues long: Quinate permease (533 aa).

Residues 1 to 21 (MSILALVEDRPTPREVYNWRV) are Cytoplasmic-facing. Residues 22–42 (YLLAAVASFTSCMIGYDSAFI) form a helical membrane-spanning segment. Residues 43–67 (GTTLSLQSFQNEFNWESLNTDLISA) lie on the Extracellular side of the membrane. The chain crosses the membrane as a helical span at residues 68-88 (NIVSLYQAGAFFGALFAYPIG). At 89 to 94 (HFWGRR) the chain is on the cytoplasmic side. The chain crosses the membrane as a helical span at residues 95–115 (WGLMFSALIFFLGAGMMLGAN). The Extracellular segment spans residues 116–127 (GDRGLGLIYGGR). Residues 128 to 148 (VLAGIGVGAGSNICPIYISEM) form a helical membrane-spanning segment. At 149 to 156 (APPAIRGR) the chain is on the cytoplasmic side. The helical transmembrane segment at 157 to 177 (LVGVYELGWQIGGVVGFWINY) threads the bilayer. Over 178 to 191 (GVDETLAPSHKQWI) the chain is Extracellular. A helical transmembrane segment spans residues 192–212 (IPFAVQLIPAGLLIIGALLIR). Residues 213-282 (ESPRWLFLRG…AWTNKRILYR (70 aa)) lie on the Cytoplasmic side of the membrane. Residues 283-303 (LFLGSMLFLWQNGSGINAINY) traverse the membrane as a helical segment. The Extracellular segment spans residues 304 to 324 (YSPRVFKSIGVSGGNTSLLTT). A helical transmembrane segment spans residues 325-346 (GIFGVVKAVITFVWLLYLIDHF). At 347-349 (GRR) the chain is on the cytoplasmic side. The helical transmembrane segment at 350–370 (NLLLVGAAGGSVCLWIVGGYI) threads the bilayer. At 371-385 (KIAKPENNPEGTQLD) the chain is on the extracellular side. A helical membrane pass occupies residues 386–406 (SGGIAAIFFFYLWTAFYTPSW). Residues 407-431 (NGTPWVINSEMFDPTVRSLAQACAA) lie on the Cytoplasmic side of the membrane. Residues 432-452 (ASNWLWNFLISRFTPQMFTSM) traverse the membrane as a helical segment. Over 453–454 (GY) the chain is Extracellular. Residues 455–475 (GVYFFFASLMILSIVFVFFLI) traverse the membrane as a helical segment. The Cytoplasmic portion of the chain corresponds to 476 to 533 (PETKGVPLESMETLFDKKPVWHAHSQLIRELRENEEAFRADMGASGKGGVTKEYVEEA).

It belongs to the major facilitator superfamily. Sugar transporter (TC 2.A.1.1) family. Interacts with creB. Ubiquitinated. Deubiquitinated by creB, probably to control its activity or amount.

It localises to the cell membrane. In terms of biological role, integral membrane transporter that imports quinic acid to be catabolized as a carbon source. The polypeptide is Quinate permease (qutD) (Emericella nidulans (strain FGSC A4 / ATCC 38163 / CBS 112.46 / NRRL 194 / M139) (Aspergillus nidulans)).